A 375-amino-acid chain; its full sequence is Transaldolase (375 aa).

K145 functions as the Schiff-base intermediate with substrate in the catalytic mechanism.

It belongs to the transaldolase family. Type 2 subfamily.

It is found in the cytoplasm. The catalysed reaction is D-sedoheptulose 7-phosphate + D-glyceraldehyde 3-phosphate = D-erythrose 4-phosphate + beta-D-fructose 6-phosphate. The protein operates within carbohydrate degradation; pentose phosphate pathway; D-glyceraldehyde 3-phosphate and beta-D-fructose 6-phosphate from D-ribose 5-phosphate and D-xylulose 5-phosphate (non-oxidative stage): step 2/3. Transaldolase is important for the balance of metabolites in the pentose-phosphate pathway. In Mycobacterium leprae (strain Br4923), this protein is Transaldolase.